We begin with the raw amino-acid sequence, 500 residues long: Trehalose-6-phosphate synthase (500 aa).

Residue arginine 28 coordinates D-glucose 6-phosphate. Residue 48–49 (GG) participates in UDP-alpha-D-glucose binding. D-glucose 6-phosphate contacts are provided by tyrosine 108 and aspartate 162. Arginine 304 and lysine 309 together coordinate UDP-alpha-D-glucose. Arginine 342 contacts D-glucose 6-phosphate. Residue 407-411 (LVAKE) participates in UDP-alpha-D-glucose binding.

It belongs to the glycosyltransferase 20 family. As to quaternary structure, homotetramer.

It carries out the reaction ADP-alpha-D-glucose + D-glucose 6-phosphate = alpha,alpha-trehalose 6-phosphate + ADP + H(+). The catalysed reaction is CDP-alpha-D-glucose + D-glucose 6-phosphate = alpha,alpha-trehalose 6-phosphate + CDP + H(+). The enzyme catalyses GDP-alpha-D-glucose + D-glucose 6-phosphate = alpha,alpha-trehalose 6-phosphate + GDP + H(+). It catalyses the reaction TDP-alpha-D-glucose + D-glucose 6-phosphate = 5-methyl-UDP + alpha,alpha-trehalose 6-phosphate + H(+). It carries out the reaction D-glucose 6-phosphate + UDP-alpha-D-glucose = alpha,alpha-trehalose 6-phosphate + UDP + H(+). It participates in glycan biosynthesis; trehalose biosynthesis. Probably involved in the osmoprotection via the biosynthesis of trehalose and in the production of glycogen and alpha-glucan via the TreS-Pep2 branch involved in the biosynthesis of maltose-1-phosphate (M1P). Catalyzes the transfer of glucose from UDP-glucose (UDP-Glc) to D-glucose 6-phosphate (Glc-6-P) to form trehalose-6-phosphate. Probably also able to use ADP-Glc, CDP-Glc, GDP-Glc and TDP-Glc as glucosyl donors. The protein is Trehalose-6-phosphate synthase of Mycobacterium tuberculosis (strain CDC 1551 / Oshkosh).